The primary structure comprises 133 residues: ATP synthase epsilon chain, chloroplastic (133 aa).

The protein belongs to the ATPase epsilon chain family. As to quaternary structure, F-type ATPases have 2 components, CF(1) - the catalytic core - and CF(0) - the membrane proton channel. CF(1) has five subunits: alpha(3), beta(3), gamma(1), delta(1), epsilon(1). CF(0) has three main subunits: a, b and c.

It is found in the plastid. The protein localises to the chloroplast thylakoid membrane. Its function is as follows. Produces ATP from ADP in the presence of a proton gradient across the membrane. This is ATP synthase epsilon chain, chloroplastic from Chara vulgaris (Common stonewort).